The chain runs to 155 residues: SsrA-binding protein (155 aa).

The protein belongs to the SmpB family.

The protein resides in the cytoplasm. Required for rescue of stalled ribosomes mediated by trans-translation. Binds to transfer-messenger RNA (tmRNA), required for stable association of tmRNA with ribosomes. tmRNA and SmpB together mimic tRNA shape, replacing the anticodon stem-loop with SmpB. tmRNA is encoded by the ssrA gene; the 2 termini fold to resemble tRNA(Ala) and it encodes a 'tag peptide', a short internal open reading frame. During trans-translation Ala-aminoacylated tmRNA acts like a tRNA, entering the A-site of stalled ribosomes, displacing the stalled mRNA. The ribosome then switches to translate the ORF on the tmRNA; the nascent peptide is terminated with the 'tag peptide' encoded by the tmRNA and targeted for degradation. The ribosome is freed to recommence translation, which seems to be the essential function of trans-translation. The protein is SsrA-binding protein of Bacillus cytotoxicus (strain DSM 22905 / CIP 110041 / 391-98 / NVH 391-98).